A 313-amino-acid chain; its full sequence is Ribosomal RNA small subunit methyltransferase H (313 aa).

S-adenosyl-L-methionine-binding positions include 35–37, aspartate 55, phenylalanine 80, aspartate 102, and glutamine 109; that span reads GGH.

Belongs to the methyltransferase superfamily. RsmH family.

It localises to the cytoplasm. The catalysed reaction is cytidine(1402) in 16S rRNA + S-adenosyl-L-methionine = N(4)-methylcytidine(1402) in 16S rRNA + S-adenosyl-L-homocysteine + H(+). Functionally, specifically methylates the N4 position of cytidine in position 1402 (C1402) of 16S rRNA. The sequence is that of Ribosomal RNA small subunit methyltransferase H from Shewanella denitrificans (strain OS217 / ATCC BAA-1090 / DSM 15013).